A 340-amino-acid polypeptide reads, in one-letter code: MSEKNAYAQSGVDVEAGYEVVERIKKHVARTERAGVMGALGGFGGMFDLSQTGVKEPVLISGTDGVGTKLMLAIKYDKHDTIGQDCVAMCVNDIIAAGAEPLYFLDYVATGKNEPAKLEQVVAGVAEGCVQASAALIGGETAEMPGMYGEDDYDLAGFAVGVAEKSQIIDGSKVKEGDILLGLASSGIHSNGYSLVRRVFADYTGDEVLPELEGKQLKDVLLEPTRIYVKAALPLIKEELVNGIAHITGGGFIENVPRMFADDLAAEIDEDKVPVLPIFKALEKYGDIKHEEMFEIFNMGVGLMLDVNPENVDRVKELLDEPVYEIGRIIKKADDSVVIK.

It belongs to the AIR synthase family.

The protein localises to the cytoplasm. The enzyme catalyses 2-formamido-N(1)-(5-O-phospho-beta-D-ribosyl)acetamidine + ATP = 5-amino-1-(5-phospho-beta-D-ribosyl)imidazole + ADP + phosphate + H(+). The protein operates within purine metabolism; IMP biosynthesis via de novo pathway; 5-amino-1-(5-phospho-D-ribosyl)imidazole from N(2)-formyl-N(1)-(5-phospho-D-ribosyl)glycinamide: step 2/2. The chain is Phosphoribosylformylglycinamidine cyclo-ligase from Streptococcus agalactiae serotype V (strain ATCC BAA-611 / 2603 V/R).